The chain runs to 363 residues: Type 3 secretion system translocon protein SctB (363 aa).

The helical transmembrane segment at 99–120 (ISSLSSNAVSLIISVAVLLSAL) threads the bilayer.

It belongs to the SctB/SipC family. The core secretion machinery of the T3SS is composed of approximately 20 different proteins, including cytoplasmic components, a base, an export apparatus and a needle. This subunit is involved in the formation of a pore, called the translocon, in host membrane.

The protein resides in the secreted. It is found in the host membrane. Its function is as follows. Component of the type III secretion system (T3SS), also called injectisome, which is used to inject bacterial effector proteins into eukaryotic host cells. IpaB/SctE and IpaC/SctB are inserted into the host membrane where they form a pore and allow the translocation of effector proteins into the cytosol of target cells. The chain is Type 3 secretion system translocon protein SctB from Shigella dysenteriae.